A 475-amino-acid chain; its full sequence is Secreted triacylglycerol lipase LIP5 (475 aa).

The first 19 residues, 1–19, serve as a signal peptide directing secretion; it reads MYPCTLLMVLLCLAIMTHG. An intrachain disulfide couples cysteine 129 to cysteine 300. The Nucleophile role is filled by serine 213. Asparagine 246 and asparagine 312 each carry an N-linked (GlcNAc...) asparagine glycan. Aspartate 360 is an active-site residue. Asparagine 369 carries an N-linked (GlcNAc...) asparagine glycan. Histidine 394 is a catalytic residue. A glycan (N-linked (GlcNAc...) asparagine) is linked at asparagine 471.

This sequence belongs to the AB hydrolase superfamily. Lipase family. Class Lip subfamily.

The catalysed reaction is a triacylglycerol + H2O = a diacylglycerol + a fatty acid + H(+). It catalyses the reaction a monoacylglycerol + H2O = glycerol + a fatty acid + H(+). It carries out the reaction a diacylglycerol + H2O = a monoacylglycerol + a fatty acid + H(+). Secreted lipase involved in Dandruff and seborrheic dermatitis (D/SD) probably via lipase-mediated breakdown of sebaceous lipids and release of irritating free fatty acids. Has triacylglycerol lipase activity and is able to hydrolyze triolein. Mostly converts monoolein to di- and triolein, while free fatty acids are only produced in low amounts. The protein is Secreted triacylglycerol lipase LIP5 of Malassezia globosa (strain ATCC MYA-4612 / CBS 7966) (Dandruff-associated fungus).